Reading from the N-terminus, the 336-residue chain is MTRLNTCTFIKQIVKMTSIAALLGASLNSWAAPTEIKFSHVVAENTPKGQMALKFKQLVEERLPGEYQVNVFPNSQLFGDNNELSALLLNDVQFVAPSLSKFERYTKKLQLFDLPFLFKDMDAVNRFQQSDAGQQLLNSMKRKGVVGLGYLHNGMKQFSASSPLVLPEDAQGKKFRIMASDVLAAQFQAVEAIPVKKPFSEVFTLLQTRAIDGQENTWSNIYSKKFYEVQSNITESNHGVLDYMVVTSNTFWKSLPADKRKVIKASLDEAIAYGNEIAAAKVNKDKQAIIDSKRSEVTYLTPEQRAAWVNAMKPVWAQFEDKIGKDLIDAAVASNE.

An N-terminal signal peptide occupies residues M1–A31. (S)-malate is bound by residues K48, K101, R176, N216, N220, and Y243. The succinate site is built by K48, K101, R176, N216, N220, and Y243.

Belongs to the bacterial solute-binding protein 7 family. In terms of assembly, the complex comprises the extracytoplasmic solute receptor protein DctP, and the two transmembrane proteins DctQ and DctM.

It localises to the periplasm. In terms of biological role, part of the tripartite ATP-independent periplasmic (TRAP) transport system DctPQM involved in C4-dicarboxylates uptake. Required for the utilization of succinate, fumarate, L-malate and alpha-ketoglutarate. Binds succinate and malate. The chain is C4-dicarboxylate-binding periplasmic protein DctP from Shewanella loihica (strain ATCC BAA-1088 / PV-4).